Reading from the N-terminus, the 82-residue chain is Antimicrobial peptide Smp43 (82 aa).

A signal peptide spans 1–22; that stretch reads MNRKLLLVTLMVTMLVMQPAEA. The propeptide occupies 66–82; that stretch reads EAGQMPFDEFMDILYES.

It belongs to the non-disulfide-bridged peptide (NDBP) superfamily. Long chain multifunctional peptide (group 2) family. As to expression, expressed by the venom gland.

The protein localises to the secreted. The protein resides in the target cell membrane. Its function is as follows. Antimicrobial peptide with moderate activity against Gram-positive bacteria and Gram-negative bacteria, as well as low activity against fungi. Acts by inducing bacterial membrane disruption. Shows activity against B.subtilis (MIC=4 ug/ml), S.epidermidis (MIC=64 ug/ml), S.aureus (MIC=32 ug/ml), E.coli (MIC=128 ug/ml), K.pneumoniae (MIC=64 ug/ml), P.aeruginosa (MIC=64 ug/ml), and C.albicans (MIC=128 ug/ml). Does not show hemolysis activity. The chain is Antimicrobial peptide Smp43 from Scorpio palmatus (Israeli golden scorpion).